Reading from the N-terminus, the 523-residue chain is UDP-glucuronosyltransferase 3A2 (523 aa).

Positions 1 to 22 (MAAHRRWLLMSFLFLEVILLEA) are cleaved as a signal peptide. Residues 23–487 (AKILTISTLS…QPWHEQYMLD (465 aa)) lie on the Extracellular side of the membrane. Residue Asn52 is glycosylated (N-linked (GlcNAc...) asparagine). Residues 488–508 (VFLFLLGLMLGTLWLSVKVLV) traverse the membrane as a helical segment. Over 509–523 (AVTRYLSIATKVKEA) the chain is Cytoplasmic.

This sequence belongs to the UDP-glycosyltransferase family. In terms of tissue distribution, highly expressed in kidney, while it is expressed at low levels in liver. Not detected in other tissues examined.

It is found in the membrane. The enzyme catalyses glucuronate acceptor + UDP-alpha-D-glucuronate = acceptor beta-D-glucuronoside + UDP + H(+). In terms of biological role, UDP-glucuronosyltransferases catalyze phase II biotransformation reactions in which lipophilic substrates are conjugated with glucuronic acid to increase water solubility and enhance excretion. They are of major importance in the conjugation and subsequent elimination of potentially toxic xenobiotics and endogenous compounds. This chain is UDP-glucuronosyltransferase 3A2 (Ugt3a2), found in Mus musculus (Mouse).